A 418-amino-acid polypeptide reads, in one-letter code: D-amino acid dehydrogenase 1 (418 aa).

Position 3-17 (3-17) interacts with FAD; the sequence is IMVLGGGVIGVTTAY.

The protein belongs to the DadA oxidoreductase family. The cofactor is FAD.

It catalyses the reaction a D-alpha-amino acid + A + H2O = a 2-oxocarboxylate + AH2 + NH4(+). Its pathway is amino-acid degradation; D-alanine degradation; NH(3) and pyruvate from D-alanine: step 1/1. Functionally, oxidative deamination of D-amino acids. This is D-amino acid dehydrogenase 1 (dadA1) from Mesorhizobium japonicum (strain LMG 29417 / CECT 9101 / MAFF 303099) (Mesorhizobium loti (strain MAFF 303099)).